The primary structure comprises 262 residues: ATP synthase subunit a (262 aa).

Transmembrane regions (helical) follow at residues 30-50 (ITSL…LTIF), 64-84 (WNIV…DQIG), 91-111 (LIYF…NILG), 123-143 (ISVT…IGFS), 149-169 (FFSL…LVLI), 195-215 (LFGV…SILL), and 220-240 (IGLP…VALL).

Belongs to the ATPase A chain family. F-type ATPases have 2 components, CF(1) - the catalytic core - and CF(0) - the membrane proton channel. CF(1) has five subunits: alpha(3), beta(3), gamma(1), delta(1), epsilon(1). CF(0) has three main subunits: a, b and c.

The protein resides in the mitochondrion inner membrane. Mitochondrial membrane ATP synthase (F(1)F(0) ATP synthase or Complex V) produces ATP from ADP in the presence of a proton gradient across the membrane which is generated by electron transport complexes of the respiratory chain. F-type ATPases consist of two structural domains, F(1) - containing the extramembraneous catalytic core and F(0) - containing the membrane proton channel, linked together by a central stalk and a peripheral stalk. During catalysis, ATP synthesis in the catalytic domain of F(1) is coupled via a rotary mechanism of the central stalk subunits to proton translocation. Key component of the proton channel; it may play a direct role in the translocation of protons across the membrane. The protein is ATP synthase subunit a (ATP6) of Allomyces arbusculus (Aquatic fungus).